A 135-amino-acid polypeptide reads, in one-letter code: C-type lectin BpLec (135 aa).

Disulfide bonds link cysteine 3–cysteine 14, cysteine 31–cysteine 131, cysteine 38–cysteine 133, and cysteine 106–cysteine 123. The C-type lectin domain occupies 10-132 (MNGLCYKIFD…CESKNAFLCQ (123 aa)). The Ca(2+) site is built by glutamine 96, aspartate 98, glutamate 104, asparagine 119, and aspartate 120. The Galactose-binding signature appears at 96 to 98 (QPD).

It belongs to the true venom lectin family. Homodimer; disulfide-linked. Expressed by the venom gland.

It localises to the secreted. In terms of biological role, this lectin displays hemagglutinating activity on dog (128'000 HU/mg) and cat erythrocytes, that is inhibited by beta-galactosides (D-galactose, D-lactose, and N-acetyl-D-galactosamine) and EDTA. In addition, has been shown to hemagglutinate promastigote forms of Leishmania amazonensis. Also inhibits Gram-positive (S.aureus ATCC 25923) (MIC is 31.25 ug/ml) but not Gram-negative (E.coli ATCC 25922) bacteria. Is a calcium-dependent lectin. This Bothrops pauloensis (Neuwied's lancehead) protein is C-type lectin BpLec.